Consider the following 220-residue polypeptide: Uracil-DNA glycosylase (220 aa).

D65 (proton acceptor) is an active-site residue.

This sequence belongs to the uracil-DNA glycosylase (UDG) superfamily. UNG family.

Its subcellular location is the cytoplasm. It carries out the reaction Hydrolyzes single-stranded DNA or mismatched double-stranded DNA and polynucleotides, releasing free uracil.. Its function is as follows. Excises uracil residues from the DNA which can arise as a result of misincorporation of dUMP residues by DNA polymerase or due to deamination of cytosine. The polypeptide is Uracil-DNA glycosylase (Leuconostoc mesenteroides subsp. mesenteroides (strain ATCC 8293 / DSM 20343 / BCRC 11652 / CCM 1803 / JCM 6124 / NCDO 523 / NBRC 100496 / NCIMB 8023 / NCTC 12954 / NRRL B-1118 / 37Y)).